The primary structure comprises 248 residues: Anamorsin homolog (248 aa).

Residues 4-129 are N-terminal SAM-like domain; it reads FKGLQKSLYI…ETGSSARLSF (126 aa). A linker region spans residues 130–161; that stretch reads AKKNASAVNVWKISGDDEELIDEEELLDEEDK. C172, C181, C184, and C186 together coordinate [2Fe-2S] cluster. Residues 172–186 are fe-S binding site A; sequence CSTTGKRKACKNCSC. Positions 209, 212, 220, and 223 each coordinate [4Fe-4S] cluster. Short sequence motifs (cx2C motif) lie at residues 209-212 and 220-223; these read CGNC and CSTC. The segment at 209–223 is fe-S binding site B; it reads CGNCYLGDAFRCSTC.

The protein belongs to the anamorsin family. In terms of assembly, monomer. [2Fe-2S] cluster is required as a cofactor. It depends on [4Fe-4S] cluster as a cofactor.

The protein resides in the cytoplasm. It is found in the mitochondrion intermembrane space. Functionally, component of the cytosolic iron-sulfur (Fe-S) protein assembly (CIA) machinery. Required for the maturation of extramitochondrial Fe-S proteins. Part of an electron transfer chain functioning in an early step of cytosolic Fe-S biogenesis, facilitating the de novo assembly of a [4Fe-4S] cluster on the cytosolic Fe-S scaffold complex. Electrons are transferred from NADPH via a FAD- and FMN-containing diflavin oxidoreductase. Together with the diflavin oxidoreductase, also required for the assembly of the diferric tyrosyl radical cofactor of ribonucleotide reductase (RNR), probably by providing electrons for reduction during radical cofactor maturation in the catalytic small subunit. The protein is Anamorsin homolog of Drosophila yakuba (Fruit fly).